Here is a 132-residue protein sequence, read N- to C-terminus: Prefoldin subunit alpha (132 aa).

This sequence belongs to the prefoldin subunit alpha family. In terms of assembly, heterohexamer of two alpha and four beta subunits.

The protein localises to the cytoplasm. In terms of biological role, molecular chaperone capable of stabilizing a range of proteins. Seems to fulfill an ATP-independent, HSP70-like function in archaeal de novo protein folding. This chain is Prefoldin subunit alpha (pfdA), found in Pyrobaculum aerophilum (strain ATCC 51768 / DSM 7523 / JCM 9630 / CIP 104966 / NBRC 100827 / IM2).